Consider the following 287-residue polypeptide: 2-dehydro-3-deoxyphosphooctonate aldolase (287 aa).

The protein belongs to the KdsA family.

The protein localises to the cytoplasm. It carries out the reaction D-arabinose 5-phosphate + phosphoenolpyruvate + H2O = 3-deoxy-alpha-D-manno-2-octulosonate-8-phosphate + phosphate. It functions in the pathway carbohydrate biosynthesis; 3-deoxy-D-manno-octulosonate biosynthesis; 3-deoxy-D-manno-octulosonate from D-ribulose 5-phosphate: step 2/3. The protein operates within bacterial outer membrane biogenesis; lipopolysaccharide biosynthesis. The polypeptide is 2-dehydro-3-deoxyphosphooctonate aldolase (Caulobacter vibrioides (strain ATCC 19089 / CIP 103742 / CB 15) (Caulobacter crescentus)).